A 197-amino-acid chain; its full sequence is MEPIQVHKGKAVVLDRVNIDTDQIIPKQFLKRVERTGFGQYLFYDWRFQADGADNPAFELNQPEANGASILITGHNFGCGSSREHAPWALYDYGFRVIIAPSFADIFYNNCVKNGLLPIRLSPEETELWMERAKESQEEITVDLGEQLIKQNGLETKFEMDSYWKQMLYNGWDEISLTLQYEEAIAKYEHRQSAVNK.

It belongs to the LeuD family. LeuD type 1 subfamily. In terms of assembly, heterodimer of LeuC and LeuD.

It carries out the reaction (2R,3S)-3-isopropylmalate = (2S)-2-isopropylmalate. It functions in the pathway amino-acid biosynthesis; L-leucine biosynthesis; L-leucine from 3-methyl-2-oxobutanoate: step 2/4. Functionally, catalyzes the isomerization between 2-isopropylmalate and 3-isopropylmalate, via the formation of 2-isopropylmaleate. This Shouchella clausii (strain KSM-K16) (Alkalihalobacillus clausii) protein is 3-isopropylmalate dehydratase small subunit.